The sequence spans 543 residues: Glucose transporter HT1 (543 aa).

A disordered region spans residues 1 to 24; that stretch reads MPEYPTEDTNASGKTSGSSPDDHT. Residues 1-38 are Cytoplasmic-facing; it reads MPEYPTEDTNASGKTSGSSPDDHTDDNAPSFFSCENLC. Over residues 7–19 the composition is skewed to polar residues; the sequence is EDTNASGKTSGSS. A helical membrane pass occupies residues 39–59; the sequence is IVQVPVSTGSLNGFSIGFVAV. The Extracellular portion of the chain corresponds to 60-120; the sequence is YMHLYEIFSG…GSGYNSLESG (61 aa). 2 N-linked (GlcNAc...) asparagine glycosylation sites follow: N90 and N91. A helical transmembrane segment spans residues 121 to 141; that stretch reads LFACSMIVGSMIGSIFAGKFL. At 142 to 147 the chain is on the cytoplasmic side; the sequence is SKFGLK. A helical transmembrane segment spans residues 148–168; it reads MSFIVSGVLGIVGSALIHVAT. Residues 169-172 lie on the Extracellular side of the membrane; it reads RGST. A helical membrane pass occupies residues 173-193; it reads LWVMCVGRFLMGLVLGLVCVA. Residues 194-212 are Cytoplasmic-facing; the sequence is SPMYVNENAHPKYRKTIGV. Residues 213–233 traverse the membrane as a helical segment; it reads LFQVFTTFGIMFAALLGLAIV. Over 234–248 the chain is Extracellular; it reads KTPGHDKASGLLWRM. A helical transmembrane segment spans residues 249-269; it reads QVFCSVSTALSALLLVLGLVV. Residues 270–300 are Cytoplasmic-facing; sequence RKSKTSFAGGVDSAGEGVLDPNEYSVRQMLG. The helical transmembrane segment at 301-321 threads the bilayer; sequence PLAVGAVTAGTLQLTGINAVM. Residues 322–337 lie on the Extracellular side of the membrane; that stretch reads NYAPEIMRNIGMDPME. Residues 338 to 358 traverse the membrane as a helical segment; sequence GNSAVMSWNFVTALVAIPLVS. Residues 359–364 are Cytoplasmic-facing; the sequence is RFTMRQ. Residues 365-385 traverse the membrane as a helical segment; the sequence is LFLACSFMASCACLIMCGIPV. The Extracellular segment spans residues 386 to 400; it reads YPGVASVDNRNIVAT. The helical transmembrane segment at 401-421 threads the bilayer; sequence VGIAVFIAAFEFGVGSCFFVL. Residues 422 to 436 lie on the Cytoplasmic side of the membrane; sequence AQDLFPRSFRPTGSS. Residues 437–457 form a helical membrane-spanning segment; that stretch reads FVVMAQFIFNIMINLLYPITV. Topologically, residues 458–470 are extracellular; the sequence is EAISGGKGKSPEK. Residues 471–491 form a helical membrane-spanning segment; the sequence is GQSVSFIIFGIIGIICFVLQL. Topologically, residues 492-543 are cytoplasmic; it reads RYLTPWEDGQGTSTSPTARCNAPTSPNNGEGEPATADMSPVEMSTPKHSGAA. The segment covering 503 to 519 has biased composition (polar residues); the sequence is TSTSPTARCNAPTSPNN. Residues 503–543 are disordered; it reads TSTSPTARCNAPTSPNNGEGEPATADMSPVEMSTPKHSGAA.

Belongs to the major facilitator superfamily. Sugar transporter (TC 2.A.1.1) family.

The protein localises to the membrane. Facilitative glucose transporter. Binds D-fructose and cytochalasin-B, but not D-galactose. The chain is Glucose transporter HT1 (HT1) from Trypanosoma vivax (Duttonella vivax).